Here is a 544-residue protein sequence, read N- to C-terminus: Chaperonin GroEL 1 (544 aa).

ATP is bound by residues 29 to 32 (TLGP), 86 to 90 (DGTTT), G413, 482 to 484 (NVL), and D498.

It belongs to the chaperonin (HSP60) family. In terms of assembly, forms a cylinder of 14 subunits composed of two heptameric rings stacked back-to-back. Interacts with the co-chaperonin GroES.

It localises to the cytoplasm. It catalyses the reaction ATP + H2O + a folded polypeptide = ADP + phosphate + an unfolded polypeptide.. In terms of biological role, together with its co-chaperonin GroES, plays an essential role in assisting protein folding. The GroEL-GroES system forms a nano-cage that allows encapsulation of the non-native substrate proteins and provides a physical environment optimized to promote and accelerate protein folding. The protein is Chaperonin GroEL 1 of Chloroflexus aurantiacus (strain ATCC 29366 / DSM 635 / J-10-fl).